The following is a 158-amino-acid chain: 6,7-dimethyl-8-ribityllumazine synthase 2 (158 aa).

5-amino-6-(D-ribitylamino)uracil-binding positions include Trp-20, 54 to 56 (AYE), and 78 to 80 (FVI). The active-site Proton donor is the Arg-86. Ser-111 is a 5-amino-6-(D-ribitylamino)uracil binding site. His-125 is a binding site for (2S)-2-hydroxy-3-oxobutyl phosphate.

This sequence belongs to the DMRL synthase family. As to quaternary structure, homodecamer, arranged as a dimer of pentamers.

It localises to the cytoplasm. The catalysed reaction is (2S)-2-hydroxy-3-oxobutyl phosphate + 5-amino-6-(D-ribitylamino)uracil = 6,7-dimethyl-8-(1-D-ribityl)lumazine + phosphate + 2 H2O + H(+). Its pathway is cofactor biosynthesis; riboflavin biosynthesis; riboflavin from 2-hydroxy-3-oxobutyl phosphate and 5-amino-6-(D-ribitylamino)uracil: step 1/2. Its function is as follows. Catalyzes the formation of 6,7-dimethyl-8-ribityllumazine by condensation of 5-amino-6-(D-ribitylamino)uracil with 3,4-dihydroxy-2-butanone 4-phosphate. This is the penultimate step in the biosynthesis of riboflavin. The isozyme RibH2 but not RibH1 is essential for Brucella intracellular survival and replication inside macrophages or in mice. Displays low catalytic activity in comparison with the isozyme RibH1. Is a highly immunogenic protein. Activates dendritic cells (DCs) in vitro, increasing the levels of costimulatory molecules and the secretion of pro-inflammatory cytokines, and recruits DCs, B cells and CD8+ T cells in vivo, both effects in a TLR4-dependent manner. Induces the cross presentation of covalently attached peptides and generates a strong and long-lasting humoral immune response without adjuvants; TLR4 signaling is necessary for the induction of the cytotoxic response but not for antigen cross presentation. Elicits a TLR4-mediated protective response against B16 melanoma in mice, slowing tumor growth and prolonging mice survival. This chain is 6,7-dimethyl-8-ribityllumazine synthase 2, found in Brucella abortus (strain 2308).